The sequence spans 342 residues: Heat-inducible transcription repressor HrcA (342 aa).

The protein belongs to the HrcA family.

Functionally, negative regulator of class I heat shock genes (grpE-dnaK-dnaJ and groELS operons). Prevents heat-shock induction of these operons. The polypeptide is Heat-inducible transcription repressor HrcA (Leptospira borgpetersenii serovar Hardjo-bovis (strain JB197)).